The primary structure comprises 432 residues: MQVSVETTQGLGRRVTITIAADSIETAVKSELVNVAKKVRIDGFRKGKVPMNIVAQRYGASVRQDVLGDLMSRNFVDAIIKEKINPAGAPNYVPGEYKVGEDFTYSVEFEVYPEVELTGLESIEVEKPVVEVTDADVDVMLDTLRKQQATWKEKDGAADAEDRVTIDFTGSVDGEEFEGGKATDFVLAMGQGRMIPGFEDGVKGHKAGEEFTIDVTFPEEYHAENLKGKAAKFVINLKKVEERGLPELTEEFIKRFGVEDGSVAGLRAEVRKNMERELKGAVRNRVKSQAIEGLVKANDIDVPAALIDSEIDVLRRQAAQRFGGNEKQALELPRELFEEQAKRRVVVGLLLGEVIRTNELKADEERVKGLIEEMASAYEDPKEVIEFYSKNKELMDNMRNVALEEQAVEAVLAKAKVSEKATSFNELMNQQA.

In terms of domain architecture, PPIase FKBP-type spans 161-246; it reads EDRVTIDFTG…LKKVEERGLP (86 aa).

This sequence belongs to the FKBP-type PPIase family. Tig subfamily.

The protein resides in the cytoplasm. The enzyme catalyses [protein]-peptidylproline (omega=180) = [protein]-peptidylproline (omega=0). Its function is as follows. Involved in protein export. Acts as a chaperone by maintaining the newly synthesized protein in an open conformation. Functions as a peptidyl-prolyl cis-trans isomerase. The protein is Trigger factor of Salmonella choleraesuis (strain SC-B67).